Consider the following 425-residue polypeptide: Inositol hexakisphosphate kinase 2 (425 aa).

ATP-binding positions include 206–208 and Asp219; that span reads ENL. Substrate-binding positions include 215–223, Lys221, and 235–242; these read PCVLDLKMG and KAANQIRK. Asp382 is a binding site for ATP. His385 lines the substrate pocket.

This sequence belongs to the inositol phosphokinase (IPK) family. As to expression, highly expressed in small intestine.

The protein localises to the nucleus. It carries out the reaction 1D-myo-inositol hexakisphosphate + ATP = 5-diphospho-1D-myo-inositol 1,2,3,4,6-pentakisphosphate + ADP. It functions in the pathway phospholipid metabolism; phosphatidylinositol metabolism. Converts inositol hexakisphosphate (InsP6) to diphosphoinositol pentakisphosphate (InsP7/PP-InsP5). This is Inositol hexakisphosphate kinase 2 (Ip6k2) from Rattus norvegicus (Rat).